The primary structure comprises 1767 residues: E3 ubiquitin-protein ligase listerin (1767 aa).

HEAT repeat units lie at residues 59 to 96, 100 to 138, 273 to 314, 335 to 372, 380 to 418, 433 to 473, and 509 to 547; these read SLVDSDFRMVLRKLSKKDVTTKLKAMQEFGIMCTERDT, KGVLPYWPRIFCKISLDHDRRVREATQQAFEKLILKVKK, SAYF…VVCP, NAKKSVFPKLMAMIREGGRGLAAVMYPYLLPFISKLPQ, DFFKNFLTSLVTGLSTERTKSSSSECSAVISAFFECLRF, LINE…KADA, and VKSVLCVSSLVGVLQRPRSSLKLHRKKTAQVRFAINIPE. The segment at 550 to 583 is disordered; sequence KGDEKSMSSEGENSEGSDGGAQSPLSNTSSDLVS. Positions 572-581 are enriched in polar residues; the sequence is SPLSNTSSDL. HEAT repeat units follow at residues 621–658, 676–714, 1067–1104, 1183–1226, 1315–1353, 1378–1415, and 1476–1513; these read LDSFSSVQVFNILLSDKQKNVVKAKPLEITKLAEKNPA, EDGGFLVDILYSALRCCDSGVERKEVLDDLTKEDLKWSS, SETSSLLQLLFDRSRKNGTLWSLIIAKLILSRSISSDE, QLLH…IMRF, GIHSLLLPLLVNAIGENKDLSETSFQNAMLKPMCETLTY, EHLQTLLNTLTPLLLFRARPVQIAAYHMLCKLMPELPQ, and LGYLLTWKLILTFFKAASSQLRALYSMYLRKTKSLNKL. The RING-type zinc-finger motif lies at 1716 to 1763; the sequence is CMICFSVIHGFNYSLPKKACRTCKKKFHSACLYKWFTSSNKSTCPLCR.

It belongs to the LTN1 family. As to quaternary structure, component of the ribosome quality control complex (RQC), composed of at least the E3 ubiquitin ligase LTN1 and NEMF associated with the 60S ribosomal subunit. The complex probably also contains TCF25 as well as VCP/p97 and its ubiquitin-binding cofactors. In terms of processing, autoubiquitinated. As to expression, widely expressed, including in the brain and spinal cord.

The protein resides in the cytoplasm. It localises to the cytosol. The enzyme catalyses S-ubiquitinyl-[E2 ubiquitin-conjugating enzyme]-L-cysteine + [acceptor protein]-L-lysine = [E2 ubiquitin-conjugating enzyme]-L-cysteine + N(6)-ubiquitinyl-[acceptor protein]-L-lysine.. The protein operates within protein modification; protein ubiquitination. In terms of biological role, E3 ubiquitin-protein ligase. component of the ribosome quality control complex (RQC), a ribosome-associated complex that mediates ubiquitination and extraction of incompletely synthesized nascent chains for proteasomal degradation. Within the RQC complex, LTN1 is recruited to stalled 60S ribosomal subunits by NEMF and mediates ubiquitination of stalled nascent chains. Ubiquitination leads to VCP/p97 recruitment for extraction and degradation of the incomplete translation product. The chain is E3 ubiquitin-protein ligase listerin (Ltn1) from Mus musculus (Mouse).